A 600-amino-acid chain; its full sequence is Elongation factor 4 (600 aa).

A tr-type G domain is found at 3-185; sequence KYIRNFSIIA…CLIHDIPHPQ (183 aa). Residues 15 to 20 and 132 to 135 each bind GTP; these read DHGKST and NKID.

Belongs to the TRAFAC class translation factor GTPase superfamily. Classic translation factor GTPase family. LepA subfamily.

The protein localises to the cell inner membrane. It carries out the reaction GTP + H2O = GDP + phosphate + H(+). In terms of biological role, required for accurate and efficient protein synthesis under certain stress conditions. May act as a fidelity factor of the translation reaction, by catalyzing a one-codon backward translocation of tRNAs on improperly translocated ribosomes. Back-translocation proceeds from a post-translocation (POST) complex to a pre-translocation (PRE) complex, thus giving elongation factor G a second chance to translocate the tRNAs correctly. Binds to ribosomes in a GTP-dependent manner. The polypeptide is Elongation factor 4 (Blochmanniella pennsylvanica (strain BPEN)).